Consider the following 126-residue polypeptide: Holo-[acyl-carrier-protein] synthase (126 aa).

Residues Asp-9 and Glu-58 each contribute to the Mg(2+) site.

Belongs to the P-Pant transferase superfamily. AcpS family. Mg(2+) serves as cofactor.

The protein localises to the cytoplasm. It carries out the reaction apo-[ACP] + CoA = holo-[ACP] + adenosine 3',5'-bisphosphate + H(+). Transfers the 4'-phosphopantetheine moiety from coenzyme A to a Ser of acyl-carrier-protein. The protein is Holo-[acyl-carrier-protein] synthase of Aliivibrio fischeri (strain MJ11) (Vibrio fischeri).